The following is a 744-amino-acid chain: 5-methyltetrahydropteroyltriglutamate--homocysteine methyltransferase (744 aa).

5-methyltetrahydropteroyltri-L-glutamate-binding positions include 17–20 (REVK) and Lys-110. L-homocysteine-binding positions include 422–424 (IGS) and Glu-475. L-methionine contacts are provided by residues 422–424 (IGS) and Glu-475. 5-methyltetrahydropteroyltri-L-glutamate is bound at residue Trp-552. L-homocysteine is bound at residue Asp-590. Asp-590 contacts L-methionine. 5-methyltetrahydropteroyltri-L-glutamate is bound at residue Glu-596. Residues His-632, Cys-634, and Glu-656 each coordinate Zn(2+). The active-site Proton donor is His-685. Cys-717 lines the Zn(2+) pocket.

The protein belongs to the vitamin-B12 independent methionine synthase family. Zn(2+) serves as cofactor.

The catalysed reaction is 5-methyltetrahydropteroyltri-L-glutamate + L-homocysteine = tetrahydropteroyltri-L-glutamate + L-methionine. Its pathway is amino-acid biosynthesis; L-methionine biosynthesis via de novo pathway; L-methionine from L-homocysteine (MetE route): step 1/1. Functionally, catalyzes the transfer of a methyl group from 5-methyltetrahydrofolate to homocysteine resulting in methionine formation. The sequence is that of 5-methyltetrahydropteroyltriglutamate--homocysteine methyltransferase from Trichodesmium erythraeum (strain IMS101).